We begin with the raw amino-acid sequence, 170 residues long: Ankyrin repeat-containing protein C105.02c (170 aa).

ANK repeat units lie at residues 46–76 and 81–116; these read LGND…NLNN and TGDT…DPLL. Positions 150–170 are disordered; that stretch reads SADVVADDDDEEEGSGESDEE. Positions 154-170 are enriched in acidic residues; that stretch reads VADDDDEEEGSGESDEE.

It localises to the cytoplasm. It is found in the nucleus. This Schizosaccharomyces pombe (strain 972 / ATCC 24843) (Fission yeast) protein is Ankyrin repeat-containing protein C105.02c.